We begin with the raw amino-acid sequence, 84 residues long: CDC42 small effector protein 2 (84 aa).

Residues Cys-10 and Cys-11 are each lipidated (S-palmitoyl cysteine). The CRIB domain maps to 29-42; the sequence is IGEPTNFVHTAHVG. Ser-43 and Ser-52 each carry phosphoserine.

Belongs to the CDC42SE/SPEC family. In terms of assembly, interacts with CDC42 (in GTP-bound form). Interacts weakly with RAC1 and not at all with RHOA.

Its subcellular location is the cytoplasm. The protein resides in the cytoskeleton. It is found in the cell membrane. It localises to the cell projection. The protein localises to the phagocytic cup. Probably involved in the organization of the actin cytoskeleton by acting downstream of CDC42, inducing actin filament assembly. Alters CDC42-induced cell shape changes. In activated T-cells, may play a role in CDC42-mediated F-actin accumulation at the immunological synapse. May play a role in early contractile events in phagocytosis in macrophages. This Bos taurus (Bovine) protein is CDC42 small effector protein 2 (CDC42SE2).